Reading from the N-terminus, the 377-residue chain is Galactoside alpha-(1,2)-fucosyltransferase 1 (377 aa).

Over 1-8 (MWTPSRRQ) the chain is Cytoplasmic. Residues 9–26 (LCLAFLLVCVLSAGSFFF) traverse the membrane as a helical; Signal-anchor for type II membrane protein segment. The Lumenal portion of the chain corresponds to 27 to 377 (HLNGGNFFRN…WKPDSLFRLV (351 aa)). Asn-67, Asn-303, and Asn-329 each carry an N-linked (GlcNAc...) asparagine glycan.

This sequence belongs to the glycosyltransferase 11 family. As to expression, in the adult, highly expressed in pancreas, testis and epididymis and to a lesser extent in thymus, lung, stomach, small intestine, colon, spleen and uterus. Not expressed in brain, heart, skeletal muscle, kidney, liver and bone marrow. Expressed in epididymis and testis.

It is found in the golgi apparatus. Its subcellular location is the golgi stack membrane. It catalyses the reaction a beta-D-galactosyl-(1-&gt;4)-N-acetyl-beta-D-glucosaminyl derivative + GDP-beta-L-fucose = an alpha-L-Fuc-(1-&gt;2)-beta-D-Gal-(1-&gt;4)-beta-D-GlcNAc derivative + GDP + H(+). The catalysed reaction is a ganglioside GA1 + GDP-beta-L-fucose = a ganglioside Fuc-GA1 + GDP + H(+). It carries out the reaction a beta-D-Gal-(1-&gt;3)-beta-D-GlcNAc-(1-&gt;3)-beta-D-Gal-(1-&gt;4)-beta-D-Glc-(1&lt;-&gt;1')-Cer(d18:1(4E)) + GDP-beta-L-fucose = alpha-L-fucosyl-(1-&gt;2)- beta-D-galactosyl-(1-&gt;3)-N-acetyl-beta-D-glucosaminyl-(1-&gt;3)-beta-D-galactosyl-(1-&gt;4)-beta-D-glucosyl-(1&lt;-&gt;1')-N-acylsphing-4-enine + GDP + H(+). The enzyme catalyses a neolactoside nLc4Cer(d18:1(4E)) + GDP-beta-L-fucose = a neolactoside IV(2)-alpha-Fuc-nLc4Cer(d18:1(4E)) + GDP + H(+). It catalyses the reaction a ganglioside GM1 + GDP-beta-L-fucose = a ganglioside Fuc-GM1 + GDP + H(+). The catalysed reaction is beta-D-galactosyl-(1-&gt;3)-N-acetyl-D-galactosamine + GDP-beta-L-fucose = alpha-L-fucosyl-(1-&gt;2)-beta-D-galactosyl-(1-&gt;3)-N-acetyl-D-galactosamine + GDP + H(+). It participates in protein modification; protein glycosylation. In terms of biological role, catalyzes the transfer of L-fucose, from a guanosine diphosphate-beta-L-fucose, to the terminal galactose residue of glycoconjugates through an alpha(1,2) linkage leading to H antigen synthesis that is an intermediate substrate in the synthesis of ABO blood group antigens. H antigen is essential for maturation of the glomerular layer of the main olfactory bulb, in cell migration and early cell-cell contacts during tumor associated angiogenesis. Preferentially fucosylates soluble lactose and to a lesser extent, fucosylates glycolipids gangliosides GA1 and GM1a. The protein is Galactoside alpha-(1,2)-fucosyltransferase 1 of Mus musculus (Mouse).